Reading from the N-terminus, the 233-residue chain is UPF0502 protein YPTS_2082 (233 aa).

The protein belongs to the UPF0502 family.

This chain is UPF0502 protein YPTS_2082, found in Yersinia pseudotuberculosis serotype IB (strain PB1/+).